A 149-amino-acid chain; its full sequence is Transcriptional regulator MraZ (149 aa).

SpoVT-AbrB domains follow at residues 9–52 (AYSY…PRAQ) and 82–125 (AQEV…DRAR).

Belongs to the MraZ family. As to quaternary structure, forms oligomers.

Its subcellular location is the cytoplasm. It localises to the nucleoid. This chain is Transcriptional regulator MraZ, found in Treponema pallidum subsp. pallidum (strain SS14).